Here is a 202-residue protein sequence, read N- to C-terminus: Probable molybdenum cofactor guanylyltransferase (202 aa).

Residues 13-15, Lys25, Asp71, and Asp103 contribute to the GTP site; that span reads LAG. Asp103 serves as a coordination point for Mg(2+).

It belongs to the MobA family. The cofactor is Mg(2+).

The protein resides in the cytoplasm. The catalysed reaction is Mo-molybdopterin + GTP + H(+) = Mo-molybdopterin guanine dinucleotide + diphosphate. Functionally, transfers a GMP moiety from GTP to Mo-molybdopterin (Mo-MPT) cofactor (Moco or molybdenum cofactor) to form Mo-molybdopterin guanine dinucleotide (Mo-MGD) cofactor. The sequence is that of Probable molybdenum cofactor guanylyltransferase from Opitutus terrae (strain DSM 11246 / JCM 15787 / PB90-1).